The following is a 438-amino-acid chain: MPISKIHARSVYDSRGNPTVEVDVVTETGLHRAIVPSGASTGQHEAHELRDGDKSKWLGKGVLTAVKNVNETIGPAVIKENLDVKEQSKIDEFLNKLDGTPNKSNLGANAILGVSLAIAKAGAAEKGVPLYAHISDLAGTKKPYVLPVPFQNVLNGGSHAGGRLAFQEFMIVPDTASSFSEGLRQGAEVYHKLKALAKKKYGQSAGNVGDEGGVAPDIQTAEEALDLITEAIEQAGYTGKIHIAMDVASSEFYKPEEKKYDLDFKNPDSDPSKWLTYEQLADLYKSLAAKYPIVSIEDPFAEDDWEAWSYFYKTSDFQIVGDDLTVTNPLRIKKAIELKSCNALLLKVNQIGTLTESIQAAKDSYADGWGVMVSHRSGETEDVTIADISVGLRSGQIKTGAPARSERLAKLNQILRIEEELGENAVYAGQNFRKSVNL.

Positions 159 and 168 each coordinate substrate. Catalysis depends on E211, which acts as the Proton donor. Residues D246, E297, and D322 each coordinate Mg(2+). 2 residues coordinate substrate: E297 and D322. K347 acts as the Proton acceptor in catalysis. Substrate-binding positions include 374 to 377 (SHRS) and K398.

The protein belongs to the enolase family. In terms of assembly, homodimer. It depends on Mg(2+) as a cofactor.

The protein localises to the cytoplasm. It carries out the reaction (2R)-2-phosphoglycerate = phosphoenolpyruvate + H2O. The protein operates within carbohydrate degradation; glycolysis; pyruvate from D-glyceraldehyde 3-phosphate: step 4/5. Functionally, involved in osmoadaptation. This chain is Enolase (enoA), found in Emericella nidulans (strain FGSC A4 / ATCC 38163 / CBS 112.46 / NRRL 194 / M139) (Aspergillus nidulans).